The sequence spans 141 residues: Glutamyl-tRNA(Gln) amidotransferase subunit C, chloroplastic/mitochondrial (141 aa).

Belongs to the GatC family. In terms of assembly, subunit of the heterotrimeric GatCAB amidotransferase (AdT) complex, composed of A, B and C subunits.

The protein localises to the mitochondrion. The protein resides in the plastid. It is found in the chloroplast. It catalyses the reaction L-glutamyl-tRNA(Gln) + L-glutamine + ATP + H2O = L-glutaminyl-tRNA(Gln) + L-glutamate + ADP + phosphate + H(+). Its function is as follows. Allows the formation of correctly charged Gln-tRNA(Gln) through the transamidation of misacylated Glu-tRNA(Gln) in chloroplasts and mitochondria. The reaction takes place in the presence of glutamine and ATP through an activated gamma-phospho-Glu-tRNA(Gln). This is Glutamyl-tRNA(Gln) amidotransferase subunit C, chloroplastic/mitochondrial from Populus trichocarpa (Western balsam poplar).